The chain runs to 450 residues: Bifunctional apoptosis regulator (450 aa).

Positions 1–20 are disordered; the sequence is MEEPQKSYVNTMDLERDEPL. Over 1–140 the chain is Cytoplasmic; sequence MEEPQKSYVN…PNTGRANQQM (140 aa). Residues 34 to 74 form an RING-type zinc finger; it reads CHCCYDILVNPTTLNCGHSFCRHCLALWWASSKKTECPECR. The helical transmembrane segment at 141 to 161 threads the bilayer; the sequence is GGGFFSGVLTALTGVAVVLLV. At 162-331 the chain is on the lumenal side; sequence YHWSSRESEH…KEPTWKQWRE (170 aa). The SAM domain maps to 182 to 249; the sequence is WTAEEVVLWL…LMELERVKAL (68 aa). An N-linked (GlcNAc...) asparagine glycan is attached at Asn232. The helical transmembrane segment at 332–352 threads the bilayer; it reads FLVKYSFLPYQLIAEFAWDWL. Topologically, residues 353–360 are cytoplasmic; the sequence is EVHYWTSR. Residues 361-381 traverse the membrane as a helical segment; it reads FLIINAMLLSVLELFSFWRIW. Topologically, residues 382–404 are lumenal; sequence SRSELKTVPQRMWSHFWKVSTQG. A helical membrane pass occupies residues 405–425; that stretch reads LFVAMFWPLIPQFVCNCLFYW. The Cytoplasmic segment spans residues 426 to 450; it reads ALYFNPIINIDLVVKELRRLETQVL.

As to quaternary structure, interacts with CASP8, BCL2 and BCL2L1 through SAM domain and also with HIP1, IFT57, ESRRBL1 and BCAP31. Interacts with NGFR; this interaction inhibits NF-kappa-B and JNK-related signaling pathways. In terms of processing, mediates RING-dependent self-ubiquitination leading to proteasomal degradation. As to expression, expressed highly in brain, moderately in small intestine, weakly in testes and only faintly in liver and skeletal muscle. Not expressed in heart, kidney, lung and spleen.

The protein resides in the endoplasmic reticulum membrane. It carries out the reaction S-ubiquitinyl-[E2 ubiquitin-conjugating enzyme]-L-cysteine + [acceptor protein]-L-lysine = [E2 ubiquitin-conjugating enzyme]-L-cysteine + N(6)-ubiquitinyl-[acceptor protein]-L-lysine.. Its function is as follows. Membrane-bound E3 ubiquitin ligase that plays a role in several processes including apoptosis regulation or reticulum endoplasmic stress. Has anti-apoptotic activity, both for apoptosis triggered via death-receptors and via mitochondrial factors. Contributes to the dynamic control of IRE1/ERN1 signaling during ER stress by inducing BAX inhibitor 1/TMBIM6 proteasomal degradation. Promotes the activation of TGF-beta signaling by mediating the 'Lys-63'-linked ubiquitination of TGFBR1 which is critical to activate the pathway. Together with NGFR, negatively regulates NF-kappa-B and JNK-related signaling pathways. Promotes the proteasome-mediated degradation of PNPLA3, a protein involveld in lipid metabolism. This chain is Bifunctional apoptosis regulator (BFAR), found in Homo sapiens (Human).